Consider the following 316-residue polypeptide: 4-hydroxy-3-methylbut-2-enyl diphosphate reductase (316 aa).

C12 contacts [4Fe-4S] cluster. (2E)-4-hydroxy-3-methylbut-2-enyl diphosphate contacts are provided by H41 and H74. Positions 41 and 74 each coordinate dimethylallyl diphosphate. The isopentenyl diphosphate site is built by H41 and H74. Residue C96 participates in [4Fe-4S] cluster binding. (2E)-4-hydroxy-3-methylbut-2-enyl diphosphate is bound at residue H124. A dimethylallyl diphosphate-binding site is contributed by H124. Residue H124 participates in isopentenyl diphosphate binding. The Proton donor role is filled by E126. T167 is a (2E)-4-hydroxy-3-methylbut-2-enyl diphosphate binding site. C197 contributes to the [4Fe-4S] cluster binding site. (2E)-4-hydroxy-3-methylbut-2-enyl diphosphate is bound by residues S225, S226, N227, and S269. Dimethylallyl diphosphate is bound by residues S225, S226, N227, and S269. Isopentenyl diphosphate-binding residues include S225, S226, N227, and S269.

Belongs to the IspH family. In terms of assembly, homodimer. It depends on [4Fe-4S] cluster as a cofactor.

The catalysed reaction is isopentenyl diphosphate + 2 oxidized [2Fe-2S]-[ferredoxin] + H2O = (2E)-4-hydroxy-3-methylbut-2-enyl diphosphate + 2 reduced [2Fe-2S]-[ferredoxin] + 2 H(+). It catalyses the reaction dimethylallyl diphosphate + 2 oxidized [2Fe-2S]-[ferredoxin] + H2O = (2E)-4-hydroxy-3-methylbut-2-enyl diphosphate + 2 reduced [2Fe-2S]-[ferredoxin] + 2 H(+). Its pathway is isoprenoid biosynthesis; dimethylallyl diphosphate biosynthesis; dimethylallyl diphosphate from (2E)-4-hydroxy-3-methylbutenyl diphosphate: step 1/1. It functions in the pathway isoprenoid biosynthesis; isopentenyl diphosphate biosynthesis via DXP pathway; isopentenyl diphosphate from 1-deoxy-D-xylulose 5-phosphate: step 6/6. Its function is as follows. Catalyzes the conversion of 1-hydroxy-2-methyl-2-(E)-butenyl 4-diphosphate (HMBPP) into a mixture of isopentenyl diphosphate (IPP) and dimethylallyl diphosphate (DMAPP). Acts in the terminal step of the DOXP/MEP pathway for isoprenoid precursor biosynthesis. This is 4-hydroxy-3-methylbut-2-enyl diphosphate reductase from Salmonella paratyphi C (strain RKS4594).